Reading from the N-terminus, the 1048-residue chain is Protein argonaute 7 (1048 aa).

Residues 1-14 (MEGEREGVVAKNED) are compositionally biased toward basic and acidic residues. 2 disordered regions span residues 1-50 (MEGE…GSSG) and 121-141 (KAAD…KKPP). Residues 16–37 (AGGGGGGLGTGGNGGGGGGGSA) are compositionally biased toward gly residues. Positions 131–141 (MWKHRPSKKPP) are enriched in basic residues. A PAZ domain is found at 422–530 (KRCDFLKDLP…VPMELCVVCE (109 aa)). One can recognise a Piwi domain in the interval 709–1017 (LLICVMERRH…AAYRGRLYLE (309 aa)).

This sequence belongs to the argonaute family. Ago subfamily. In terms of tissue distribution, expressed in the reproductive shoot apex.

Its function is as follows. Involved in the RNA silencing pathway. May bind to short RNAs such as microRNAs (miRNAs) or short interfering RNAs (siRNAs), and represses the translation of mRNAs which are complementary to them. Regulates shoot apical meristem (SAM) initiation and maintenance and leaf polarization through the trans-acting siRNAS (ta-siRNAs) pathway which probably modulates the expression of the ARF2, ARF3, ARF4, ARF14 and ARF15 genes. This Oryza sativa subsp. japonica (Rice) protein is Protein argonaute 7 (AGO7).